The following is a 150-amino-acid chain: UPF0178 protein DMR_20710 (150 aa).

It belongs to the UPF0178 family.

In Solidesulfovibrio magneticus (strain ATCC 700980 / DSM 13731 / RS-1) (Desulfovibrio magneticus), this protein is UPF0178 protein DMR_20710.